The primary structure comprises 479 residues: CBL-interacting serine/threonine-protein kinase 10 (479 aa).

A Protein kinase domain is found at 12-266; the sequence is YDVGRLLGQG…IARIRESSWF (255 aa). Residues 18–26 and lysine 41 contribute to the ATP site; that span reads LGQGTFAKV. Aspartate 134 functions as the Proton acceptor in the catalytic mechanism. The segment at 152–181 is activation loop; sequence DFGLSALADCKRQDGLLHTTCGTPAYVAPE. At serine 156 the chain carries Phosphoserine. A Phosphothreonine modification is found at threonine 170. The disordered stretch occupies residues 286-323; the sequence is SVEAGTAGTNENGAGPSENGAGPSENGDRVTEENHTDE. Residues 288 to 300 show a composition bias toward low complexity; sequence EAGTAGTNENGAG. The segment covering 311–323 has biased composition (basic and acidic residues); that stretch reads NGDRVTEENHTDE. An NAF domain is found at 322–346; that stretch reads DEPTNLNAFDLIALSAGFDLAGLFG. The interval 350 to 379 is PPI; it reads KRESRFTSQKPASVIISKLEEVAQRLKLSI. Residues 456–479 are disordered; the sequence is SQQETEYQQQQQQEQQEQEEPLKF. A compositionally biased stretch (low complexity) spans 457-470; the sequence is QQETEYQQQQQQEQ.

Belongs to the protein kinase superfamily. CAMK Ser/Thr protein kinase family. SNF1 subfamily. In terms of assembly, interacts with CBL4/SOS3. The cofactor is Mn(2+). In terms of tissue distribution, mostly expressed in roots.

The catalysed reaction is L-seryl-[protein] + ATP = O-phospho-L-seryl-[protein] + ADP + H(+). The enzyme catalyses L-threonyl-[protein] + ATP = O-phospho-L-threonyl-[protein] + ADP + H(+). Functionally, CIPK serine-threonine protein kinases interact with CBL proteins. Binding of a CBL protein to the regulatory NAF domain of CIPK protein lead to the activation of the kinase in a calcium-dependent manner. The chain is CBL-interacting serine/threonine-protein kinase 10 (CIPK10) from Arabidopsis thaliana (Mouse-ear cress).